We begin with the raw amino-acid sequence, 380 residues long: RNA-binding motif protein, Y chromosome, family 9 (380 aa).

The RRM domain maps to glycine 8–arginine 86. Disordered stretches follow at residues lysine 82–arginine 226 and histidine 279–serine 358. Polar residues predominate over residues arginine 166 to glycine 178. 2 stretches are compositionally biased toward basic and acidic residues: residues arginine 180–serine 190 and isoleucine 333–lysine 351.

In terms of tissue distribution, testis-specific.

The protein resides in the nucleus. Its function is as follows. RNA-binding protein which may be involved in spermatogenesis. May be required for sperm development, possibly by participating in pre-mRNA splicing in the testis. This Mus musculus (Mouse) protein is RNA-binding motif protein, Y chromosome, family 9.